Here is a 275-residue protein sequence, read N- to C-terminus: Large ribosomal subunit protein uL2 (275 aa).

The span at 35–49 (DSQSSTAGRNNNGRI) shows a compositional bias: polar residues. Disordered regions lie at residues 35-59 (DSQS…GGHK) and 224-275 (AMNP…RHKR). A compositionally biased stretch (basic residues) spans 50 to 59 (TTRHKGGGHK).

It belongs to the universal ribosomal protein uL2 family. Part of the 50S ribosomal subunit. Forms a bridge to the 30S subunit in the 70S ribosome.

Functionally, one of the primary rRNA binding proteins. Required for association of the 30S and 50S subunits to form the 70S ribosome, for tRNA binding and peptide bond formation. It has been suggested to have peptidyltransferase activity; this is somewhat controversial. Makes several contacts with the 16S rRNA in the 70S ribosome. The protein is Large ribosomal subunit protein uL2 of Burkholderia orbicola (strain AU 1054).